The chain runs to 647 residues: Beta-glucosidase-like SFR2, chloroplastic (647 aa).

The tract at residues Ser116–Gln140 is disordered. A compositionally biased stretch (polar residues) spans Ser123–Gly132. Residue Asn169 is glycosylated (N-linked (GlcNAc...) asparagine). A beta-D-glucoside is bound by residues His258, Asn302–Glu303, Tyr414, Glu466, Trp504, Glu511–Trp512, and Phe520. Glu303 acts as the Proton donor in catalysis. The Nucleophile role is filled by Glu466.

Belongs to the glycosyl hydrolase 1 family.

The protein resides in the plastid. It localises to the chloroplast outer membrane. The enzyme catalyses 2 a 1,2-diacyl-3-O-(beta-D-galactosyl)-sn-glycerol = a 1,2-diacyl-3-O-[beta-D-galactosyl-(1-&gt;6)-beta-D-galactosyl]-sn-glycerol + a 1,2-diacyl-sn-glycerol. Galactosyltransferase synthesizing digalactosyldiacylglycerol from monogalactosyldiacylglycerol in the absence of UDP-galactose. Potentially involved in freezing tolerance. In Oryza sativa subsp. japonica (Rice), this protein is Beta-glucosidase-like SFR2, chloroplastic.